The chain runs to 318 residues: 4-hydroxy-3-methylbut-2-enyl diphosphate reductase (318 aa).

A [4Fe-4S] cluster-binding site is contributed by Cys-12. His-41 and His-74 together coordinate (2E)-4-hydroxy-3-methylbut-2-enyl diphosphate. Residues His-41 and His-74 each contribute to the dimethylallyl diphosphate site. 2 residues coordinate isopentenyl diphosphate: His-41 and His-74. Cys-96 contacts [4Fe-4S] cluster. His-124 contributes to the (2E)-4-hydroxy-3-methylbut-2-enyl diphosphate binding site. A dimethylallyl diphosphate-binding site is contributed by His-124. Residue His-124 participates in isopentenyl diphosphate binding. Glu-126 serves as the catalytic Proton donor. (2E)-4-hydroxy-3-methylbut-2-enyl diphosphate is bound at residue Thr-167. Position 197 (Cys-197) interacts with [4Fe-4S] cluster. (2E)-4-hydroxy-3-methylbut-2-enyl diphosphate-binding residues include Ser-225, Ser-226, Asn-227, and Ser-269. Dimethylallyl diphosphate is bound by residues Ser-225, Ser-226, Asn-227, and Ser-269. Isopentenyl diphosphate contacts are provided by Ser-225, Ser-226, Asn-227, and Ser-269.

This sequence belongs to the IspH family. [4Fe-4S] cluster serves as cofactor.

It carries out the reaction isopentenyl diphosphate + 2 oxidized [2Fe-2S]-[ferredoxin] + H2O = (2E)-4-hydroxy-3-methylbut-2-enyl diphosphate + 2 reduced [2Fe-2S]-[ferredoxin] + 2 H(+). The catalysed reaction is dimethylallyl diphosphate + 2 oxidized [2Fe-2S]-[ferredoxin] + H2O = (2E)-4-hydroxy-3-methylbut-2-enyl diphosphate + 2 reduced [2Fe-2S]-[ferredoxin] + 2 H(+). It functions in the pathway isoprenoid biosynthesis; dimethylallyl diphosphate biosynthesis; dimethylallyl diphosphate from (2E)-4-hydroxy-3-methylbutenyl diphosphate: step 1/1. It participates in isoprenoid biosynthesis; isopentenyl diphosphate biosynthesis via DXP pathway; isopentenyl diphosphate from 1-deoxy-D-xylulose 5-phosphate: step 6/6. Functionally, catalyzes the conversion of 1-hydroxy-2-methyl-2-(E)-butenyl 4-diphosphate (HMBPP) into a mixture of isopentenyl diphosphate (IPP) and dimethylallyl diphosphate (DMAPP). Acts in the terminal step of the DOXP/MEP pathway for isoprenoid precursor biosynthesis. The protein is 4-hydroxy-3-methylbut-2-enyl diphosphate reductase of Francisella tularensis subsp. holarctica (strain LVS).